We begin with the raw amino-acid sequence, 207 residues long: ConoCAP (207 aa).

The N-terminal stretch at 1–21 (MVSLGHVLFVILLPVLLPVAA) is a signal peptide. The propeptide occupies 22–48 (DDPDDQMLSQISLPSSSRSEYDDNDVS). An intrachain disulfide couples Cys-53 to Cys-59. The residue at position 60 (Gly-60) is a Glycine amide. The propeptide occupies 63 to 82 (HRDRSRRQERYGKRLIPVLA). Cysteines 87 and 92 form a disulfide. The residue at position 94 (Asn-94) is an Asparagine amide. A propeptide spanning residues 98 to 160 (SLSGAGPALS…RDPAASGDLS (63 aa)) is cleaved from the precursor. The segment at 131–155 (ARHEQQQQLLQQREQRGLESRDPAA) is disordered. Residues 143–152 (REQRGLESRD) show a composition bias toward basic and acidic residues. A disulfide bridge links Cys-165 with Cys-171. Gly-173 carries the post-translational modification Glycine amide. Positions 177 to 207 (TLYSPWLERMNEVADDRSARNALCTRLGWRE) are excised as a propeptide.

As to expression, expressed by the venom duct.

Its subcellular location is the secreted. In contrast to other members of the CCAP family which are cardio-accelerators, conoCAP-a decreases the heart frequency in Drosophila larvae (26%), rats and zebrafish embryos. It also reduces the blood pressure in rats. It decreases systolic calcium in ventricular cardiac myocytes, indicating that it may act via impairment of intracellular calcium trafficking. In terms of biological role, synthetic conoCAP-b decreases the heart frequency of 23% in Drosophila larvae. Functionally, synthetic conoCAP-c decreases the heart frequency of 12% in Drosophila larvae. This Conus villepinii (Villepin's cone) protein is ConoCAP (conoCAP).